A 422-amino-acid polypeptide reads, in one-letter code: UDP-N-acetylglucosamine 1-carboxyvinyltransferase (422 aa).

Position 22–23 (22–23 (KN)) interacts with phosphoenolpyruvate. Arg-94 serves as a coordination point for UDP-N-acetyl-alpha-D-glucosamine. Cys-118 functions as the Proton donor in the catalytic mechanism. Residue Cys-118 is modified to 2-(S-cysteinyl)pyruvic acid O-phosphothioketal. UDP-N-acetyl-alpha-D-glucosamine-binding positions include 123 to 127 (RPIDL), Asp-309, and Leu-331.

The protein belongs to the EPSP synthase family. MurA subfamily.

Its subcellular location is the cytoplasm. It catalyses the reaction phosphoenolpyruvate + UDP-N-acetyl-alpha-D-glucosamine = UDP-N-acetyl-3-O-(1-carboxyvinyl)-alpha-D-glucosamine + phosphate. Its pathway is cell wall biogenesis; peptidoglycan biosynthesis. Functionally, cell wall formation. Adds enolpyruvyl to UDP-N-acetylglucosamine. This is UDP-N-acetylglucosamine 1-carboxyvinyltransferase from Sulfurimonas denitrificans (strain ATCC 33889 / DSM 1251) (Thiomicrospira denitrificans (strain ATCC 33889 / DSM 1251)).